A 317-amino-acid polypeptide reads, in one-letter code: MIFLTLEHILTHISFSVVSIVITIHLINLLVNEIVGLYNSSEKGMIVTLFCITGFLIIRWIYSGHFPLSNLYESLIFLSWNFSIINMLPYLKNLKNHLREITSPSTLFIQGFATSGLLTQIHEQKILVPALQSQWLMMHVSMMILSYASLLCGSLLSIALLVITFRKSRSVVGKRNKFLNRIFSNIQYINEREKILLKTSFTYSINYYRSHLLQQFDFWSYRIISIGFLFLTIGILSGAVWANEAWGSYWSWDPKETWAFITWTIFAIYLHIREKKNAEGVKSAIVASIGFLIIWICYFGINILGIGLHSYGSFPIS.

A run of 8 helical transmembrane segments spans residues 17–37 (VVSI…IVGL), 44–64 (GMIV…IYSG), 71–91 (LYES…LPYL), 101–121 (ITSP…LTQI), 143–163 (MILS…LLVI), 223–243 (IISI…VWAN), 252–272 (WDPK…YLHI), and 284–304 (AIVA…INIL).

The protein belongs to the CcmF/CycK/Ccl1/NrfE/CcsA family. May interact with Ccs1.

The protein resides in the plastid. The protein localises to the chloroplast thylakoid membrane. Functionally, required during biogenesis of c-type cytochromes (cytochrome c6 and cytochrome f) at the step of heme attachment. This Pelargonium hortorum (Common geranium) protein is Cytochrome c biogenesis protein CcsA.